Consider the following 359-residue polypeptide: Heat-inducible transcription repressor HrcA (359 aa).

It belongs to the HrcA family.

Its function is as follows. Negative regulator of class I heat shock genes (grpE-dnaK-dnaJ and groELS operons). Prevents heat-shock induction of these operons. This is Heat-inducible transcription repressor HrcA from Roseiflexus sp. (strain RS-1).